A 431-amino-acid chain; its full sequence is Enolase (431 aa).

(2R)-2-phosphoglycerate is bound at residue Gln-163. The Proton donor role is filled by Glu-205. Asp-242, Glu-288, and Asp-315 together coordinate Mg(2+). The (2R)-2-phosphoglycerate site is built by Lys-340, Arg-369, Ser-370, and Lys-391. The Proton acceptor role is filled by Lys-340.

The protein belongs to the enolase family. The cofactor is Mg(2+).

It localises to the cytoplasm. The protein resides in the secreted. It is found in the cell surface. The enzyme catalyses (2R)-2-phosphoglycerate = phosphoenolpyruvate + H2O. It participates in carbohydrate degradation; glycolysis; pyruvate from D-glyceraldehyde 3-phosphate: step 4/5. Its function is as follows. Catalyzes the reversible conversion of 2-phosphoglycerate (2-PG) into phosphoenolpyruvate (PEP). It is essential for the degradation of carbohydrates via glycolysis. This is Enolase from Acholeplasma laidlawii (strain PG-8A).